Reading from the N-terminus, the 130-residue chain is D-ribose pyranase (130 aa).

H20 serves as the catalytic Proton donor. Substrate contacts are provided by residues D28, H97, and 119–121; that span reads YAN.

Belongs to the RbsD / FucU family. RbsD subfamily. As to quaternary structure, homodecamer.

The protein localises to the cytoplasm. It carries out the reaction beta-D-ribopyranose = beta-D-ribofuranose. It functions in the pathway carbohydrate metabolism; D-ribose degradation; D-ribose 5-phosphate from beta-D-ribopyranose: step 1/2. In terms of biological role, catalyzes the interconversion of beta-pyran and beta-furan forms of D-ribose. The protein is D-ribose pyranase of Paracidovorax citrulli (strain AAC00-1) (Acidovorax citrulli).